Consider the following 43-residue polypeptide: Protein PsbN (43 aa).

Residues 5–27 traverse the membrane as a helical segment; that stretch reads TLVTISISCLLVSFTGYAIYTSF.

Belongs to the PsbN family.

The protein resides in the plastid. Its subcellular location is the chloroplast thylakoid membrane. May play a role in photosystem I and II biogenesis. The polypeptide is Protein PsbN (Welwitschia mirabilis (Tree tumbo)).